The following is a 374-amino-acid chain: Queuine tRNA-ribosyltransferase (374 aa).

The active-site Proton acceptor is the Asp89. Residues 89-93 (DSGGF), Asp143, Gln187, and Gly214 contribute to the substrate site. The segment at 245 to 251 (GVGKPED) is RNA binding. Catalysis depends on Asp264, which acts as the Nucleophile. Residues 269 to 273 (TRNAR) are RNA binding; important for wobble base 34 recognition. Residues Cys302, Cys304, Cys307, and His333 each contribute to the Zn(2+) site.

It belongs to the queuine tRNA-ribosyltransferase family. As to quaternary structure, homodimer. Within each dimer, one monomer is responsible for RNA recognition and catalysis, while the other monomer binds to the replacement base PreQ1. The cofactor is Zn(2+).

It carries out the reaction 7-aminomethyl-7-carbaguanine + guanosine(34) in tRNA = 7-aminomethyl-7-carbaguanosine(34) in tRNA + guanine. It functions in the pathway tRNA modification; tRNA-queuosine biosynthesis. In terms of biological role, catalyzes the base-exchange of a guanine (G) residue with the queuine precursor 7-aminomethyl-7-deazaguanine (PreQ1) at position 34 (anticodon wobble position) in tRNAs with GU(N) anticodons (tRNA-Asp, -Asn, -His and -Tyr). Catalysis occurs through a double-displacement mechanism. The nucleophile active site attacks the C1' of nucleotide 34 to detach the guanine base from the RNA, forming a covalent enzyme-RNA intermediate. The proton acceptor active site deprotonates the incoming PreQ1, allowing a nucleophilic attack on the C1' of the ribose to form the product. After dissociation, two additional enzymatic reactions on the tRNA convert PreQ1 to queuine (Q), resulting in the hypermodified nucleoside queuosine (7-(((4,5-cis-dihydroxy-2-cyclopenten-1-yl)amino)methyl)-7-deazaguanosine). The polypeptide is Queuine tRNA-ribosyltransferase (Shewanella loihica (strain ATCC BAA-1088 / PV-4)).